Consider the following 860-residue polypeptide: Leucine--tRNA ligase (860 aa).

The 'HIGH' region signature appears at 42–52; the sequence is PYPSGRLHMGH. A 'KMSKS' region motif is present at residues 619 to 623; the sequence is KMSKS. Residue Lys622 participates in ATP binding.

This sequence belongs to the class-I aminoacyl-tRNA synthetase family.

The protein resides in the cytoplasm. The enzyme catalyses tRNA(Leu) + L-leucine + ATP = L-leucyl-tRNA(Leu) + AMP + diphosphate. The chain is Leucine--tRNA ligase from Citrobacter koseri (strain ATCC BAA-895 / CDC 4225-83 / SGSC4696).